The following is a 64-amino-acid chain: Large ribosomal subunit protein bL35c (64 aa).

It belongs to the bacterial ribosomal protein bL35 family.

It localises to the plastid. The protein localises to the chloroplast. The polypeptide is Large ribosomal subunit protein bL35c (Phaeodactylum tricornutum (strain CCAP 1055/1)).